Consider the following 81-residue polypeptide: Cell division protein ZapB (81 aa).

The stretch at 5-81 (LEVFEKLEAK…QALLGRMEEV (77 aa)) forms a coiled coil. Residue Lys-10 is modified to N6-acetyllysine. Residues 36 to 67 (NNSLSQEVQNAQHQREELERENNHLKEQQNGW) are disordered. The span at 37–47 (NSLSQEVQNAQ) shows a compositional bias: polar residues. The segment covering 48–62 (HQREELERENNHLKE) has biased composition (basic and acidic residues).

It belongs to the ZapB family. In terms of assembly, homodimer. The ends of the coiled-coil dimer bind to each other, forming polymers. Interacts with FtsZ.

The protein resides in the cytoplasm. Non-essential, abundant cell division factor that is required for proper Z-ring formation. It is recruited early to the divisome by direct interaction with FtsZ, stimulating Z-ring assembly and thereby promoting cell division earlier in the cell cycle. Its recruitment to the Z-ring requires functional FtsA or ZipA. The sequence is that of Cell division protein ZapB from Shigella boydii serotype 4 (strain Sb227).